Here is a 263-residue protein sequence, read N- to C-terminus: Thiamine thiazole synthase (263 aa).

Residues serine 43, 62-63, glycine 70, valine 134, and 160-162 each bind NAD(+); these read ER and HID. Aspartate 162 and histidine 177 together coordinate Fe cation. NAD(+)-binding residues include serine 180 and methionine 227. Arginine 237 is a binding site for glycine.

It belongs to the THI4 family. In terms of assembly, homooctamer; tetramer of dimers. The cofactor is Fe(2+).

The catalysed reaction is hydrogen sulfide + glycine + NAD(+) = ADP-5-ethyl-4-methylthiazole-2-carboxylate + nicotinamide + 3 H2O + H(+). It participates in cofactor biosynthesis; thiamine diphosphate biosynthesis. Its function is as follows. Involved in the biosynthesis of the thiazole moiety of thiamine. Catalyzes the conversion of NAD and glycine to adenosine diphosphate 5-(2-hydroxyethyl)-4-methylthiazole-2-carboxylate (ADT), an adenylated thiazole intermediate, using free sulfide as a source of sulfur. This is Thiamine thiazole synthase from Methanococcus aeolicus (strain ATCC BAA-1280 / DSM 17508 / OCM 812 / Nankai-3).